The chain runs to 276 residues: Aquaporin-6 (276 aa).

Residues 1 to 22 lie on the Cytoplasmic side of the membrane; sequence MEPGLCNRAYLLVGGLWTAISK. Residues 23-43 form a helical membrane-spanning segment; it reads ALFAEFLATGLYVFFGVGSVL. The Extracellular segment spans residues 44–51; sequence PWPVALPS. A helical transmembrane segment spans residues 52–70; that stretch reads VLQVAITFNLATATAVQIS. At 71–75 the chain is on the cytoplasmic side; sequence WKTSG. The segment at residues 76–85 is an intramembrane region (discontinuously helical); the sequence is AHANPAVTLA. The NPA 1 signature appears at 79–81; the sequence is NPA. Over 86–96 the chain is Cytoplasmic; it reads YLVGSHISLPR. A helical transmembrane segment spans residues 97–118; sequence AVAYIAAQLAGATVGAALLYGV. Residues 119–138 lie on the Extracellular side of the membrane; the sequence is TPGGVRETLGVNVVHNSTST. Asparagine 134 is a glycosylation site (N-linked (GlcNAc...) asparagine). A helical transmembrane segment spans residues 139-159; that stretch reads GQAVAVELVLTLQLVLCVFAS. At 160–165 the chain is on the cytoplasmic side; that stretch reads MDSRQT. The helical transmembrane segment at 166-185 threads the bilayer; sequence LGSPAAMIGTSVALGHLIGI. Topologically, residues 186–189 are extracellular; it reads YFTG. An intramembrane region (discontinuously helical) is located at residues 190 to 202; the sequence is CSMNPARSFGPAV. The NPA 2 motif lies at 193 to 195; sequence NPA. The Extracellular portion of the chain corresponds to 203-210; it reads IVGKFAVH. The chain crosses the membrane as a helical span at residues 211–231; the sequence is WIFWVGPLTGAVLASLIYNFI. The Cytoplasmic portion of the chain corresponds to 232–276; sequence LFPDTKTVAQRLAILVGTTKVEKVVDLEPQKKESQTNSEDTEVSV.

The protein belongs to the MIP/aquaporin (TC 1.A.8) family. As to quaternary structure, homotetramer; each monomer provides an independent solute pore. N-glycosylated. Kidney.

Its subcellular location is the cytoplasmic vesicle membrane. It carries out the reaction nitrate(in) = nitrate(out). The catalysed reaction is iodide(out) = iodide(in). It catalyses the reaction bromide(in) = bromide(out). The enzyme catalyses chloride(in) = chloride(out). It carries out the reaction Na(+)(in) = Na(+)(out). The catalysed reaction is H2O(in) = H2O(out). It catalyses the reaction CO2(out) = CO2(in). The enzyme catalyses NH4(+)(in) = NH4(+)(out). Its activity is regulated as follows. Activated by mercury and pH-gated, anion permeability is observed at pH 5.5 and increases markedly at pH 4.0. Selectivity for chloride increases at low pH. The water channel activity is stimulated by mercury by opposition to other aquaporins. Its function is as follows. Aquaporins form homotetrameric transmembrane channels, with each monomer independently mediating water transport across the plasma membrane along its osmotic gradient. Unlike classical aquaporins, AQP6 is an intracellular channel with selective anion permeability, particularly for nitrate, and exhibits very low water permeability. It may also facilitate the transport of gases, such as CO2 and NH4(+), as demonstrated in vitro. The polypeptide is Aquaporin-6 (Rattus norvegicus (Rat)).